The sequence spans 503 residues: Probable cytosol aminopeptidase (503 aa).

Residues lysine 274 and aspartate 279 each contribute to the Mn(2+) site. Residue lysine 286 is part of the active site. Residues aspartate 297, aspartate 356, and glutamate 358 each coordinate Mn(2+). Arginine 360 is a catalytic residue.

It belongs to the peptidase M17 family. Mn(2+) is required as a cofactor.

The protein localises to the cytoplasm. It catalyses the reaction Release of an N-terminal amino acid, Xaa-|-Yaa-, in which Xaa is preferably Leu, but may be other amino acids including Pro although not Arg or Lys, and Yaa may be Pro. Amino acid amides and methyl esters are also readily hydrolyzed, but rates on arylamides are exceedingly low.. The catalysed reaction is Release of an N-terminal amino acid, preferentially leucine, but not glutamic or aspartic acids.. Functionally, presumably involved in the processing and regular turnover of intracellular proteins. Catalyzes the removal of unsubstituted N-terminal amino acids from various peptides. The protein is Probable cytosol aminopeptidase of Burkholderia pseudomallei (strain 1106a).